An 84-amino-acid polypeptide reads, in one-letter code: Figainin 2 (84 aa).

Positions methionine 1–cysteine 22 are cleaved as a signal peptide. Basic and acidic residues predominate over residues glutamate 23–glutamate 39. Residues glutamate 23–lysine 53 form a disordered region. A propeptide spanning residues glutamate 23–glutamate 54 is cleaved from the precursor. Positions glutamate 40–asparagine 49 are enriched in acidic residues.

As to expression, expressed by the skin glands.

The protein localises to the secreted. In terms of biological role, antimicrobial peptide that displays antibacterial, antiprotozoal, and antiviral activity. Exhibits antibacterial activity against the Gram-positive bacteria S.epidermidis ATCC 12228 (MIC=4 uM), E.casseliflavus ATCC 700327 (MIC=4 uM), S.aureus ATCC 25923 (MIC=8 uM) and E.faecalis ATCC 29212 (MIC=8 uM), and the Gram-negative bacteria E.coli ATCC 25922 (MIC=8 uM), K.pneumoniae ATCC 13883 (MIC=8 uM), the multi-resistant clinical isolate strain K.pneumoniae carbapanemase (KPC) MR (MIC=16 uM), and P.aeruginosa ATCC 27853 (MIC=32 uM). Displays antiprotozoal activity against the epimastigote form of T.cruzi (IC(50)=6.32 uM). Does not show antimicrobial against the fungi C.albicans ATCC 90028 and C.parapsilosis ATCC 22019. Displays antiviral activity against the human viruses chikungunya (EC(50)=17.9 uM), Dengue serotype 4 (EC(50)=20.8 uM) and Yellow Fever (EC(50)=21.8 uM). Shows moderate cytolytic activity against human erythrocytes (HC(50)=48.9 uM), and activates the oxidative burst in human neutrophils. Also displays anti-proliferative effects against MCF-7 breast cancer cells (IC(50)=15.3 uM) and B16F10 murine melanoma cells (IC(50)=12.8 uM). This is Figainin 2 from Boana raniceps (Chaco tree frog).